The chain runs to 811 residues: DNA mismatch repair protein MutS (811 aa).

595–602 (GPNMSGKS) contacts ATP.

This sequence belongs to the DNA mismatch repair MutS family.

In terms of biological role, this protein is involved in the repair of mismatches in DNA. It is possible that it carries out the mismatch recognition step. This protein has a weak ATPase activity. This is DNA mismatch repair protein MutS from Pseudothermotoga lettingae (strain ATCC BAA-301 / DSM 14385 / NBRC 107922 / TMO) (Thermotoga lettingae).